A 2271-amino-acid polypeptide reads, in one-letter code: MGVPKRKASGGQDGAASSAGAAKRARKEELTGVRFKAQLKDPQGPGPGLEAFVSAAKKLPREDVYDVVEGYIKISVECVEIFQLLSGEKRPESETMLIFQVFEAILLRTASDLSHFHVVGTNIVKKLMNNHMKLICESLYASGYRLARACLSLMTAMVTQGPEAARDVCSHFDLNKKTLYTLVTKRDSKGVYDVRQAYVQFALSFLIAGDDSTIVQVLEVKEFIPCIFSSGIKEDRISTINILLSTLKTKVVHNKNITKTQKVRFFTGQLLNHIASLYNWNGITDVNPENVKVSAEEAGKTMVRELVHNFLMDLCCSLKHGINFYDASLGTFGRGGNLTLLHFLLGLKTAADDDLVADLVVNILKVCPDLLNKYFKEVTFSFIPRAKSTWLNNIKLLNKIYEAQPEISRAFQTREFIPLPRLLAMVMVTTVPLVCNKSMFTQALNLDSTSVRHTALSLISVILKRALKTVDHCLNKEVWQESGVYTAVMMEEFVQLFREALSKILPDLNTVVWVWQSLKKQETKQDDKKGQKRSDGPPAACDAHQCDDAETILLKAVLLQVICLYQKVVPHVVMQYNFDFSKLLKGVISEQGLREEVPPILQHHMLKVALELPASKFLWLKAQEGPDAEIIGGERSVFYLLMKMFVTSSHLQLKSLTKLLIMKILRDTGVFEHTWKELELWLEHLENTMEEDKETVIQFLERILLTLVANPYSYTDKASDFVQEASMLQATMTKQEADDMSIPISHIDDVLDMVDVLVEGSEGLDEEIGFTLSEDMILLTFPFSAVVPAALEARNKLLLGTGNEAAENVVTYLTAVLTDLLHTQRDPLALCLLLQAYDKLEPPCLVPCCQQLSRFNRYYSLWIPEQAREAWLLQAQGSPSPPALPLASSFTALLQAAYESQALRDEHIQVQLQATMPHLSMQQVLLAAKQVLLYLRSTVENFGQLGRSVGPPLLQLFLDLLRRLVVHCEQLDAQNQQRCEAARAEADLFLDMESVASLELANDQTLEEVLVAILRHPTLEGWFLALEQQALPPHTLSPVLVKLLATHFSAGVLQLLAASAPILQNIGQLGLLARYSEAITQSVLKELQNRRAGPATSPPKTPPQLEALQELHPYMEGAQLREVTLALLSLPETHLVTQQPTKSPGKERHLNALGKTLVQLLTCSPQDQLQSGELLWSSEYVRGLGALLPTLAVDELDTVLLHTLQRDPVLAPAVGADLLDYCLARRTQAALSIAALLLQESCTHLLWFEQWCLQAGPGLGLQGDLDDFLPLIHVYLQCRTRSHFTRPAGVSSAVIPVLRKTLWRQLQSRLLSTDSPPASGLYQEILAQLVPFARAKDLSVLMDRLPSLLHTPSSHKRWIVADSISAALEGSAEELCAWRRTLLESCVKWLIVSFSGGQQDDDNTQNQEKEMLLRLNALLHALNEVDPGDWQKFVKKGLKFRYQDHTFLKMLLTAVQLLYSPESSVRTKLIQLPVVYVMLMQHSLFLPTLLTSDGEESPDSQVKEALVDLMLTVVEMCPSVCESSHFAVLLGAYGATLSVLDQKILLLLRAYEQNKLSLINFRVLLWGPAAVEHHKTCRSLGRSLWQQPSVGDILRLLDRDRMMQTILHFPQNRRLLPPEDTQELIFKDKSRVDLDGLYDPCFLLQLFSELTRPEFVVDCRKFLDSNALGLTVTALSSYDPQMRAIAYHVLAAYYSHLEGARFQEQSQLLYLLDVVRNGIRTQDMRLTFTLALFIAKAALQILKPEEHMYLKVSNFLLSHEYLNMDKVPGFYQFFYSSDFEQKTEQKWVFGVLRQGIRDKQCYELCARRGIFHIILSFFHSPLCDEAAQNWILEILQNAAQVARSAYEIIRDYSLLTWILHILESKFLETPLLSNVISLLHTLWVTNLGDKAVEWESQRLCQPSSQEPAKRLALHLVNEFLYVLIVLMKHLRPTLAPVQLTNFFGTLDSVLRYRATVIQAFRDMNRFTVNETVLSTKDVLVLLHKWSLIERDLKLQEDLRAAIEKAQARELMKMLKDKNKPVMPARAKGPRGRKRRPGEAEEMADPELMASTLETCKGLLRSILTYWRPVIPGPDPTQEPVDSASPESDAPGPVYAAASLAVSWVLRSVAEHPLSRAEAAGLIGWLKSHILPHPVVVADLLKDSAVRSSIFRLYSRLCGAEGLAGPVQEVACLFNTVMLQLVAAQGRAGSPFHPAMEALSLSSLSEKDEATQASAAFLVSLYIKDIWLGAQRPDTLLTHVRMVCEAADDAPSSEEEAIVVLCKDAASAASDA.

A disordered region spans residues 1–43 (MGVPKRKASGGQDGAASSAGAAKRARKEELTGVRFKAQLKDPQ). Phosphoserine occurs at positions 17 and 1143. Residues 2021-2042 (VMPARAKGPRGRKRRPGEAEEM) form a disordered region.

Its subcellular location is the nucleus. It localises to the nucleolus. The protein is Nucleolar pre-ribosomal-associated protein 1 (URB1) of Homo sapiens (Human).